Consider the following 383-residue polypeptide: GTP-binding protein 10 homolog (383 aa).

The region spanning 22 to 157 is the Obg domain; that stretch reads PTFLDTLRLA…RTVNLDLKLI (136 aa). One can recognise an OBG-type G domain in the interval 158–353; sequence ADVGLVGFPN…VKSQLRRTLV (196 aa). GTP contacts are provided by residues 164-171, 211-215, and 287-290; these read GFPNAGKS, DLPGL, and NKMD.

Belongs to the TRAFAC class OBG-HflX-like GTPase superfamily. OBG GTPase family.

It localises to the nucleus. The protein resides in the nucleolus. Its function is as follows. May be involved in the ribosome maturation process. The chain is GTP-binding protein 10 homolog from Drosophila melanogaster (Fruit fly).